Consider the following 336-residue polypeptide: Non-structural maintenance of chromosomes element 1 (336 aa).

The segment at 268–327 adopts an RING-type; atypical zinc-finger fold; it reads LNTCQNCHKLAIQGVRCGNESCREENEETGENSLSQIWHVDCFKHYITHVSKNCDRCGSS.

The protein belongs to the NSE1 family. Component of the Smc5-Smc6 complex which consists of KRE29, MMS21, NSE1, NSE3, NSE4, NSE5, SMC5 and SMC6. Interacts with SMC5 and SMC6. Interacts with NSE3.

It is found in the nucleus. It catalyses the reaction S-ubiquitinyl-[E2 ubiquitin-conjugating enzyme]-L-cysteine + [acceptor protein]-L-lysine = [E2 ubiquitin-conjugating enzyme]-L-cysteine + N(6)-ubiquitinyl-[acceptor protein]-L-lysine.. Acts in a DNA repair pathway for removal of UV-induced DNA damage that is distinct from classical nucleotide excision repair and in repair of ionizing radiation damage. Functions in homologous recombination repair of DNA double strand breaks and in recovery of stalled replication forks. This chain is Non-structural maintenance of chromosomes element 1 (NSE1), found in Saccharomyces cerevisiae (strain ATCC 204508 / S288c) (Baker's yeast).